Consider the following 128-residue polypeptide: Large ribosomal subunit protein bL17 (128 aa).

It belongs to the bacterial ribosomal protein bL17 family. As to quaternary structure, part of the 50S ribosomal subunit. Contacts protein L32.

This is Large ribosomal subunit protein bL17 from Pseudomonas savastanoi pv. phaseolicola (strain 1448A / Race 6) (Pseudomonas syringae pv. phaseolicola (strain 1448A / Race 6)).